We begin with the raw amino-acid sequence, 453 residues long: Cysteine--tRNA ligase (453 aa).

C31 contributes to the Zn(2+) binding site. The short motif at P33–N43 is the 'HIGH' region element. Zn(2+) contacts are provided by C213, H238, and E242. The 'KMSKS' region motif lies at K271–S275. ATP is bound at residue K274.

It belongs to the class-I aminoacyl-tRNA synthetase family. Monomer. Zn(2+) serves as cofactor.

It is found in the cytoplasm. The enzyme catalyses tRNA(Cys) + L-cysteine + ATP = L-cysteinyl-tRNA(Cys) + AMP + diphosphate. This is Cysteine--tRNA ligase from Pelagibacter ubique (strain HTCC1062).